Consider the following 232-residue polypeptide: MGKLTKNQKLAAEKIEAGKAYSLKEAAQLVKDITFSKFDASLDIDVRLGVDPRKANQMVRGVVSLPHGTGKQVRVLVLCTPDAEAAAKEAGADYVGLDEYIEKIKGGWTDIDVIITMPSIMGKIGALGRVLGPRGLMPNPKSGTVTMDVAKAVKEVKQGKIDFKVDKSGIVHTSIGKVSFTADQIRDNAKEFIATIIKLKPSSAKGTYIKSIYLSSTMSKGIKIDPKTVEEN.

Belongs to the universal ribosomal protein uL1 family. As to quaternary structure, part of the 50S ribosomal subunit.

In terms of biological role, binds directly to 23S rRNA. The L1 stalk is quite mobile in the ribosome, and is involved in E site tRNA release. Its function is as follows. Protein L1 is also a translational repressor protein, it controls the translation of the L11 operon by binding to its mRNA. This is Large ribosomal subunit protein uL1 from Phocaeicola vulgatus (strain ATCC 8482 / DSM 1447 / JCM 5826 / CCUG 4940 / NBRC 14291 / NCTC 11154) (Bacteroides vulgatus).